The primary structure comprises 504 residues: Catalase (504 aa).

Catalysis depends on residues His56 and Asn129. Position 339 (Tyr339) interacts with heme.

This sequence belongs to the catalase family. Homodimer. It depends on heme as a cofactor.

The catalysed reaction is 2 H2O2 = O2 + 2 H2O. Decomposes hydrogen peroxide into water and oxygen; serves to protect cells from the toxic effects of hydrogen peroxide. This is Catalase (katA) from Staphylococcus epidermidis.